The chain runs to 393 residues: S-adenosylmethionine synthase 1 (393 aa).

Glu9 is a binding site for Mg(2+). His15 serves as a coordination point for ATP. K(+) is bound at residue Glu43. L-methionine is bound by residues Glu56 and Gln99. Cys114 bears the S-nitrosocysteine mark. Residues 167 to 169 (DGK), 235 to 238 (SGRF), Asp246, 252 to 253 (RK), Ala269, Lys273, and Lys277 each bind ATP. An L-methionine-binding site is contributed by Asp246. Residue Lys277 participates in L-methionine binding.

This sequence belongs to the AdoMet synthase family. As to quaternary structure, homotetramer. Interacts with GRF3. It depends on Mn(2+) as a cofactor. Mg(2+) serves as cofactor. Requires Co(2+) as cofactor. K(+) is required as a cofactor. In terms of processing, S-nitrosylated in the presence of NO. The inhibition of SAM1 activity by S-nitrosylation could contribute to the cross-talk between ethylene and NO signaling. As to expression, highly expressed in stems and roots.

It is found in the cytoplasm. The catalysed reaction is L-methionine + ATP + H2O = S-adenosyl-L-methionine + phosphate + diphosphate. Its pathway is amino-acid biosynthesis; S-adenosyl-L-methionine biosynthesis; S-adenosyl-L-methionine from L-methionine: step 1/1. With respect to regulation, reversibly inhibited by NO. Inhibited by 5,5'-dithiobis-2-nitrobenzoic acid (DTNB) and N-ethylmaleimide (NEM) (in vitro). In terms of biological role, catalyzes the formation of S-adenosylmethionine from methionine and ATP. The reaction comprises two steps that are both catalyzed by the same enzyme: formation of S-adenosylmethionine (AdoMet) and triphosphate, and subsequent hydrolysis of the triphosphate. The protein is S-adenosylmethionine synthase 1 (SAM1) of Arabidopsis thaliana (Mouse-ear cress).